The sequence spans 324 residues: Protein FAM228B (324 aa).

It belongs to the FAM228 family.

The polypeptide is Protein FAM228B (FAM228B) (Homo sapiens (Human)).